The sequence spans 318 residues: NADH-ubiquinone oxidoreductase chain 1 (318 aa).

Transmembrane regions (helical) follow at residues 1–21 (MLPITNSLTYIIPILIAVAFL), 71–91 (LLILSPILALTTAMLIWTPIP), 101–121 (LGLLSILAISSMAVNSTLWAG), 145–165 (VTLGIILLSILILTGGFTMQL), 172–192 (HIWLLTTSWPLTMMWFISTLA), 224–244 (FFLAEYTNIISMNLLTCIMFI), 253–273 (ELFLINLVTKTLLLSLTFLWI), and 294–314 (LPLTMALCLLQASLLVSISGI).

Belongs to the complex I subunit 1 family.

It localises to the mitochondrion inner membrane. The catalysed reaction is a ubiquinone + NADH + 5 H(+)(in) = a ubiquinol + NAD(+) + 4 H(+)(out). Its function is as follows. Core subunit of the mitochondrial membrane respiratory chain NADH dehydrogenase (Complex I) that is believed to belong to the minimal assembly required for catalysis. Complex I functions in the transfer of electrons from NADH to the respiratory chain. The immediate electron acceptor for the enzyme is believed to be ubiquinone. In Varanus rudicollis (Rough-necked monitor lizard), this protein is NADH-ubiquinone oxidoreductase chain 1 (MT-ND1).